The primary structure comprises 248 residues: MSYLIIVRHGESGWNVDGRFGGWVDVPLTGKGIKEALLCAAELEGIDLDVTFTSKLIRAQETLFLILSKQKKIGVFVHEEAGTGEDRTEREDGSRKDRKEKRYAYPPNTEKNLIPIHSNEALNERYYGILQGKKKDKMKAKYGEEQILHWCRSFDEGPPEGESLKDIYRRAVPYFEKEIFPILQDGKNVIVCAHQNSLRALIKHIEGISNEDIRKIRLANARPVIYTFSGGRLVRENAETDPSVKRNL.

Substrate is bound by residues 8-15 (RHGESGWN) and R58. The active-site Tele-phosphohistidine intermediate is the H9. Residues 82 to 101 (GTGEDRTEREDGSRKDRKEK) form a disordered region. The active-site Proton donor/acceptor is E124. Substrate contacts are provided by residues 124 to 127 (ERYY) and K135.

The protein belongs to the phosphoglycerate mutase family. BPG-dependent PGAM subfamily.

The catalysed reaction is (2R)-2-phosphoglycerate = (2R)-3-phosphoglycerate. It participates in carbohydrate degradation; glycolysis; pyruvate from D-glyceraldehyde 3-phosphate: step 3/5. Catalyzes the interconversion of 2-phosphoglycerate and 3-phosphoglycerate. The polypeptide is 2,3-bisphosphoglycerate-dependent phosphoglycerate mutase (Methanosarcina acetivorans (strain ATCC 35395 / DSM 2834 / JCM 12185 / C2A)).